Consider the following 114-residue polypeptide: Iron-sulfur cluster insertion protein ErpA (114 aa).

Iron-sulfur cluster contacts are provided by C42, C106, and C108.

Belongs to the HesB/IscA family. In terms of assembly, homodimer. Iron-sulfur cluster serves as cofactor.

Its function is as follows. Required for insertion of 4Fe-4S clusters for at least IspG. This is Iron-sulfur cluster insertion protein ErpA from Edwardsiella ictaluri (strain 93-146).